Consider the following 205-residue polypeptide: Guanylate kinase (205 aa).

Residues 18-196 (PKLFTISAPA…AYQVLRSIFI (179 aa)) form the Guanylate kinase-like domain. 25–32 (APAGAGKT) is an ATP binding site.

It belongs to the guanylate kinase family.

It localises to the cytoplasm. It carries out the reaction GMP + ATP = GDP + ADP. Its function is as follows. Essential for recycling GMP and indirectly, cGMP. The sequence is that of Guanylate kinase (gmk) from Chlamydia muridarum (strain MoPn / Nigg).